Consider the following 292-residue polypeptide: Aquaporin-3 (292 aa).

The Cytoplasmic portion of the chain corresponds to 1–24; the sequence is MGRQKELVNRCGEMLHIRYRLLRQ. The helical transmembrane segment at 25–42 threads the bilayer; sequence ALAECLGTLILVMFGCGS. Residues 43 to 56 are Extracellular-facing; that stretch reads VAQVVLSRGTHGGF. A helical transmembrane segment spans residues 57-74; sequence LTINLAFGFAVTLGILIA. At 75-78 the chain is on the cytoplasmic side; that stretch reads GQVS. An intramembrane region (discontinuously helical) is located at residues 79-92; that stretch reads GAHLNPAVTFAMCF. The NPA 1 signature appears at 83 to 85; the sequence is NPA. Residues 93–100 are Cytoplasmic-facing; sequence LAREPWIK. The chain crosses the membrane as a helical span at residues 101-121; that stretch reads LPVYTLAQTLGAFLGAGIIFG. The Extracellular segment spans residues 122 to 159; that stretch reads LYYDAIWAFANNQLIVSGPNGTAGIFATYPSGHLDMVN. N141 is a glycosylation site (N-linked (GlcNAc...) asparagine). The chain crosses the membrane as a helical span at residues 160-177; sequence GFFDQFIGTASLIVCVLA. Over 178–189 the chain is Cytoplasmic; it reads IVDPYNNPVPRG. Residues 190–206 form a helical membrane-spanning segment; sequence LEAFTVGLVVLVIGTSM. The Extracellular segment spans residues 207–210; that stretch reads GFNS. The discontinuously helical intramembrane region spans 211–224; the sequence is GYAVNPARDFGPRL. Residues 215–217 carry the NPA 2 motif; the sequence is NPA. Over 225–242 the chain is Extracellular; that stretch reads FTAIAGWGSEVFTTGRHW. The helical transmembrane segment at 243-264 threads the bilayer; it reads WWVPIVSPLLGSIAGVFVYQLM. At 265–292 the chain is on the cytoplasmic side; it reads IGCHLEPPPPSTDEENVKLSHVKHKEQM.

Belongs to the MIP/aquaporin (TC 1.A.8) family. As to quaternary structure, homotetramer; each monomer provides an independent glycerol/water pore. Could also exist in other oligomeric states.

The protein localises to the cell membrane. Its subcellular location is the basolateral cell membrane. It catalyses the reaction glycerol(in) = glycerol(out). The enzyme catalyses H2O(in) = H2O(out). The catalysed reaction is urea(in) = urea(out). It carries out the reaction H2O2(out) = H2O2(in). Aquaglyceroporins form homotetrameric transmembrane channels, with each monomer independently mediating glycerol and water transport across the plasma membrane along their osmotic gradient. Could also be permeable to urea. Also participates in cell permeability to H2O2 and H2O2-mediated signaling. In skin, transports glycerol to the epidermis and stratum corneum, where it maintains hydration, elasticity, and supports lipid biosynthesis for barrier repair. In kidney, contributes to the reabsorption of water, helping the body maintain proper fluid balance. This is Aquaporin-3 from Bos taurus (Bovine).